We begin with the raw amino-acid sequence, 450 residues long: 3-phosphoshikimate 1-carboxyvinyltransferase (450 aa).

Residues 1–25 (MSAHGDPKPMTARKGGALTGTAEVP) form a disordered region. 3-phosphoshikimate-binding residues include Lys28, Ser29, and Arg33. Residue Lys28 participates in phosphoenolpyruvate binding. Gly101 and Arg129 together coordinate phosphoenolpyruvate. Ser174, Gln176, Asp327, and Lys354 together coordinate 3-phosphoshikimate. Phosphoenolpyruvate is bound at residue Gln176. Asp327 functions as the Proton acceptor in the catalytic mechanism. 2 residues coordinate phosphoenolpyruvate: Arg358 and Arg403.

It belongs to the EPSP synthase family. Monomer.

The protein localises to the cytoplasm. The enzyme catalyses 3-phosphoshikimate + phosphoenolpyruvate = 5-O-(1-carboxyvinyl)-3-phosphoshikimate + phosphate. It functions in the pathway metabolic intermediate biosynthesis; chorismate biosynthesis; chorismate from D-erythrose 4-phosphate and phosphoenolpyruvate: step 6/7. In terms of biological role, catalyzes the transfer of the enolpyruvyl moiety of phosphoenolpyruvate (PEP) to the 5-hydroxyl of shikimate-3-phosphate (S3P) to produce enolpyruvyl shikimate-3-phosphate and inorganic phosphate. In Jannaschia sp. (strain CCS1), this protein is 3-phosphoshikimate 1-carboxyvinyltransferase.